The following is a 555-amino-acid chain: Meiotic mRNA stability protein kinase SSN3 (555 aa).

One can recognise a Protein kinase domain in the interval Y75 to F463. I81–V89 contacts ATP. The segment covering T100 to L138 has biased composition (polar residues). A disordered region spans residues T100–S166. K183 is an ATP binding site. Residue D286 is the Proton acceptor of the active site.

The protein belongs to the protein kinase superfamily. CMGC Ser/Thr protein kinase family. CDC2/CDKX subfamily. As to quaternary structure, component of the SRB8-11 complex which consists of SRB8, SSN2/SRB9, SSN3/SRB10 and SSN8/SRB11. The SRB8-11 complex associates with the Mediator complex. The SSN3/SRB10 and SSN8/SRB11 kinase-cyclin pair also associate with the RNA polymerase II holoenzyme. Interacts with TUP1.

Its subcellular location is the nucleus. The enzyme catalyses L-seryl-[protein] + ATP = O-phospho-L-seryl-[protein] + ADP + H(+). It carries out the reaction L-threonyl-[protein] + ATP = O-phospho-L-threonyl-[protein] + ADP + H(+). It catalyses the reaction [DNA-directed RNA polymerase] + ATP = phospho-[DNA-directed RNA polymerase] + ADP + H(+). Functionally, component of the SRB8-11 complex. The SRB8-11 complex is a regulatory module of the Mediator complex which is itself involved in regulation of basal and activated RNA polymerase II-dependent transcription. The SRB8-11 complex may be involved in the transcriptional repression of a subset of genes regulated by Mediator. It may inhibit the association of the Mediator complex with RNA polymerase II to form the holoenzyme complex. The SRB8-11 complex phosphorylates the C-terminal domain (CTD) of the largest subunit of RNA polymerase II RPB1 at serines 2 and 5. The SSN3/SRB10 and SSN8/SRB11 kinase-cyclin pair may also positively and negatively regulate numerous transcriptional activators in response to changes in nutritional and physiological conditions. Phosphorylates GCN4, promoting its ubiquitin-mediated degradation, and MSN2, promoting its nuclear exclusion. Phosphorylates STE12, thereby promoting its degradation and inhibition of filamentous growth. Phosphorylates GAL4, and this phosphorylation is required for efficient galactose-inducible transcription. Also phosphorylates BDF1 and the TAF2 subunit of the TFIID complex. In Saccharomyces cerevisiae (strain ATCC 204508 / S288c) (Baker's yeast), this protein is Meiotic mRNA stability protein kinase SSN3 (SSN3).